The chain runs to 224 residues: Phosphoglycolate phosphatase (224 aa).

Asp11 serves as the catalytic Nucleophile. The Mg(2+) site is built by Asp11, Asp13, and Asp177.

The protein belongs to the HAD-like hydrolase superfamily. CbbY/CbbZ/Gph/YieH family. Mg(2+) serves as cofactor.

It carries out the reaction 2-phosphoglycolate + H2O = glycolate + phosphate. It participates in organic acid metabolism; glycolate biosynthesis; glycolate from 2-phosphoglycolate: step 1/1. In terms of biological role, specifically catalyzes the dephosphorylation of 2-phosphoglycolate. Is involved in the dissimilation of the intracellular 2-phosphoglycolate formed during the DNA repair of 3'-phosphoglycolate ends, a major class of DNA lesions induced by oxidative stress. This Mannheimia succiniciproducens (strain KCTC 0769BP / MBEL55E) protein is Phosphoglycolate phosphatase.